Here is a 715-residue protein sequence, read N- to C-terminus: ATP-dependent DNA helicase Hel308 (715 aa).

Residues glutamine 35 and 53 to 60 contribute to the ATP site; that span reads SPTGSGKT. The Helicase ATP-binding domain occupies 40–203; sequence KKGLLDGNRL…WLGAEPVATN (164 aa). The DEAH box signature appears at 152–155; sequence DELH. The region spanning 236-442 is the Helicase C-terminal domain; sequence HGDDAIIAYT…ERAFYTFLLG (207 aa).

Belongs to the helicase family. Hel308 subfamily. As to quaternary structure, monomer. Interacts with PINA ATPase which decreases both DNA helicase activities of this protein.

It carries out the reaction Couples ATP hydrolysis with the unwinding of duplex DNA by translocating in the 3'-5' direction.. The enzyme catalyses ATP + H2O = ADP + phosphate + H(+). The catalysed reaction is Couples ATP hydrolysis with the unwinding of duplex DNA at the replication fork by translocating in the 5'-3' direction. This creates two antiparallel DNA single strands (ssDNA). The leading ssDNA polymer is the template for DNA polymerase III holoenzyme which synthesizes a continuous strand.. Its activity is regulated as follows. PINA inhibits the (weak) 5'-3' but not the 3'-5' helicase activity of this protein on overhang substrates. In terms of biological role, DNA-dependent ATPase and 3'-5' DNA helicase that may be involved in repair of stalled replication forks. Its function is as follows. Has predominantly 3'-5' helicase activity but also a weak 5'-3' helicase activity. Has the ability to unwind replication forks, preferentially removing the lagging strand. Hjc, Hjm (Hel308) and branch migration ATPase PINA coordinate HJ migration and cleavage of replication forks in a coordinated way. The polypeptide is ATP-dependent DNA helicase Hel308 (Saccharolobus islandicus (strain REY15A) (Sulfolobus islandicus)).